Here is a 660-residue protein sequence, read N- to C-terminus: ATP-dependent zinc metalloprotease FtsH (660 aa).

The disordered stretch occupies residues 1-20 (MMPSSQRPSPRGSRQSPSPD). Topologically, residues 1–24 (MMPSSQRPSPRGSRQSPSPDQRGR) are cytoplasmic. Residues 25-45 (IAFAILATLVVAVLLLTLFSH) traverse the membrane as a helical segment. Topologically, residues 46–118 (APSGQPLGYS…VQVSYITPGP (73 aa)) are extracellular. A helical transmembrane segment spans residues 119-139 (GIASTIIEYVIFFGIFIGIWV). Over 140 to 660 (YLTRRTQGSV…ASHDDTDPVS (521 aa)) the chain is Cytoplasmic. Position 213–220 (213–220 (GPPGTGKT)) interacts with ATP. Residue H435 participates in Zn(2+) binding. The active site involves E436. Residues H439 and D511 each coordinate Zn(2+).

It in the central section; belongs to the AAA ATPase family. The protein in the C-terminal section; belongs to the peptidase M41 family. Homohexamer. Zn(2+) is required as a cofactor.

It localises to the cell membrane. Its function is as follows. Acts as a processive, ATP-dependent zinc metallopeptidase for both cytoplasmic and membrane proteins. Plays a role in the quality control of integral membrane proteins. This is ATP-dependent zinc metalloprotease FtsH from Acidimicrobium ferrooxidans (strain DSM 10331 / JCM 15462 / NBRC 103882 / ICP).